A 397-amino-acid chain; its full sequence is Xyloglucan O-acetyltransferase 3 (397 aa).

At 1-3 the chain is on the cytoplasmic side; that stretch reads MNR. The chain crosses the membrane as a helical; Signal-anchor for type II membrane protein span at residues 4–24; the sequence is FFYTVGLIFLFSFFILYSPKT. Over 25-397 the chain is Lumenal; sequence SDLSNNVDLH…RHAFTDFTWS (373 aa). Disulfide bonds link Cys48-Cys98, Cys69-Cys134, Cys78-Cys370, and Cys293-Cys366. Asn66 carries N-linked (GlcNAc...) asparagine glycosylation. The GDS motif signature appears at 121–123; the sequence is GDS. Residue Ser123 is the Nucleophile of the active site. N-linked (GlcNAc...) asparagine glycosylation is found at Asn162, Asn182, and Asn294. Asp365 serves as the catalytic Proton donor. Positions 365 to 368 match the DXXH motif motif; it reads DCVH. His368 (proton acceptor) is an active-site residue.

This sequence belongs to the PC-esterase family. TBL subfamily.

Its subcellular location is the golgi apparatus membrane. Xyloglucan acetyltransferase that catalyzes the acetylation of fucosylated Gal residues on xyloglucan side chains. Predominantly catalyze 6-O-monoacetylation of Gal residues in the Fuc-Gal-Xyl trisaccharide side chains of xyloglucan oligomers. The sequence is that of Xyloglucan O-acetyltransferase 3 from Populus trichocarpa (Western balsam poplar).